A 657-amino-acid polypeptide reads, in one-letter code: UvrABC system protein B (657 aa).

The Helicase ATP-binding domain maps to 25 to 182 (NSIKSNNRAQ…KKLIEIQYER (158 aa)). 38–45 (GVTGSGKT) lines the ATP pocket. Positions 91–114 (YYDYYQPEAYVPQTDTFIEKDASI) match the Beta-hairpin motif. Positions 429-595 (QIDDLYGEIN…TIIKDVRDII (167 aa)) constitute a Helicase C-terminal domain. The UVR domain maps to 621-656 (DKLIKDLTEEMLLAAKNLQFERAAELRDIINEIKDG).

This sequence belongs to the UvrB family. Forms a heterotetramer with UvrA during the search for lesions. Interacts with UvrC in an incision complex.

Its subcellular location is the cytoplasm. In terms of biological role, the UvrABC repair system catalyzes the recognition and processing of DNA lesions. A damage recognition complex composed of 2 UvrA and 2 UvrB subunits scans DNA for abnormalities. Upon binding of the UvrA(2)B(2) complex to a putative damaged site, the DNA wraps around one UvrB monomer. DNA wrap is dependent on ATP binding by UvrB and probably causes local melting of the DNA helix, facilitating insertion of UvrB beta-hairpin between the DNA strands. Then UvrB probes one DNA strand for the presence of a lesion. If a lesion is found the UvrA subunits dissociate and the UvrB-DNA preincision complex is formed. This complex is subsequently bound by UvrC and the second UvrB is released. If no lesion is found, the DNA wraps around the other UvrB subunit that will check the other stand for damage. This chain is UvrABC system protein B, found in Clostridium beijerinckii (strain ATCC 51743 / NCIMB 8052) (Clostridium acetobutylicum).